A 250-amino-acid chain; its full sequence is Triosephosphate isomerase (250 aa).

8-10 contacts substrate; that stretch reads NWK. Histidine 96 functions as the Electrophile in the catalytic mechanism. The active-site Proton acceptor is glutamate 169. Substrate-binding positions include glycine 175, serine 214, and 235-236; that span reads GG.

Belongs to the triosephosphate isomerase family. Homodimer.

The protein localises to the cytoplasm. It catalyses the reaction D-glyceraldehyde 3-phosphate = dihydroxyacetone phosphate. It functions in the pathway carbohydrate biosynthesis; gluconeogenesis. It participates in carbohydrate degradation; glycolysis; D-glyceraldehyde 3-phosphate from glycerone phosphate: step 1/1. Its function is as follows. Involved in the gluconeogenesis. Catalyzes stereospecifically the conversion of dihydroxyacetone phosphate (DHAP) to D-glyceraldehyde-3-phosphate (G3P). This is Triosephosphate isomerase from Oleidesulfovibrio alaskensis (strain ATCC BAA-1058 / DSM 17464 / G20) (Desulfovibrio alaskensis).